The chain runs to 419 residues: Putative polyketide beta-ketoacyl synthase 2 (419 aa).

Residues 10 to 413 (TRRTAVTGIG…GSNAALVLRP (404 aa)) form the Ketosynthase family 3 (KS3) domain.

This sequence belongs to the thiolase-like superfamily. Beta-ketoacyl-ACP synthases family.

The protein operates within antibiotic biosynthesis; curamycin biosynthesis. In Streptomyces cyaneus (Streptomyces curacoi), this protein is Putative polyketide beta-ketoacyl synthase 2 (curB).